The chain runs to 403 residues: Peroxisomal membrane protein PEX13 (403 aa).

The span at 1–11 shows a compositional bias: pro residues; that stretch reads MASQPPPPPKP. The interval 1 to 69 is disordered; sequence MASQPPPPPK…SQQTGSGNLN (69 aa). The Peroxisomal matrix segment spans residues 1–134; the sequence is MASQPPPPPK…SSRGAFQSIE (134 aa). Residues 59 to 69 show a composition bias toward polar residues; it reads PSQQTGSGNLN. The chain crosses the membrane as a helical span at residues 135 to 155; it reads SIVHAFASVSMMMDATFSAVY. The tract at residues 145 to 233 is targeting to peroxisomes; the sequence is MMMDATFSAV…EDRAANSAKS (89 aa). At 156–174 the chain is on the cytoplasmic side; the sequence is NSFRAVLDVANHFSRLKIH. Residues 175 to 192 form a helical membrane-spanning segment; that stretch reads FTKVFSAFALVRTIRYLY. Positions 175-196 are interaction with PEX19; sequence FTKVFSAFALVRTIRYLYRRLQ. The Peroxisomal matrix portion of the chain corresponds to 193 to 233; that stretch reads RRLQWMIGLRRGLENEDLWAESEGTVACLGAEDRAANSAKS. Residues 234 to 254 traverse the membrane as a helical segment; that stretch reads WPIFLFFAVILGGPYLIWKLL. Topologically, residues 255-403 are cytoplasmic; the sequence is STHSDEVTDS…TGKNGDKQDL (149 aa). The region spanning 272-336 is the SH3 domain; the sequence is DDHVVARAEY…PANYVKILGK (65 aa). Phosphoserine is present on Ser354.

The protein belongs to the peroxin-13 family. In terms of assembly, interacts (via SH3 domain) with PEX14 (via SH3-binding motif); forming the PEX13-PEX14 docking complex. Interacts with PEX19.

The protein resides in the peroxisome membrane. Its function is as follows. Component of the PEX13-PEX14 docking complex, a translocon channel that specifically mediates the import of peroxisomal cargo proteins bound to PEX5 receptor. The PEX13-PEX14 docking complex forms a large import pore which can be opened to a diameter of about 9 nm. Mechanistically, PEX5 receptor along with cargo proteins associates with the PEX14 subunit of the PEX13-PEX14 docking complex in the cytosol, leading to the insertion of the receptor into the organelle membrane with the concomitant translocation of the cargo into the peroxisome matrix. Involved in the import of PTS1- and PTS2-type containing proteins. The polypeptide is Peroxisomal membrane protein PEX13 (PEX13) (Bos taurus (Bovine)).